The sequence spans 116 residues: Large ribosomal subunit protein bL17 (116 aa).

The protein belongs to the bacterial ribosomal protein bL17 family. In terms of assembly, part of the 50S ribosomal subunit. Contacts protein L32.

This Prochlorococcus marinus (strain MIT 9303) protein is Large ribosomal subunit protein bL17.